The chain runs to 500 residues: Probable malate:quinone oxidoreductase (500 aa).

The protein belongs to the MQO family. Requires FAD as cofactor.

It catalyses the reaction (S)-malate + a quinone = a quinol + oxaloacetate. The protein operates within carbohydrate metabolism; tricarboxylic acid cycle; oxaloacetate from (S)-malate (quinone route): step 1/1. In Bacillus cereus (strain AH187), this protein is Probable malate:quinone oxidoreductase.